Reading from the N-terminus, the 117-residue chain is Large ribosomal subunit protein bL20 (117 aa).

This sequence belongs to the bacterial ribosomal protein bL20 family.

Its function is as follows. Binds directly to 23S ribosomal RNA and is necessary for the in vitro assembly process of the 50S ribosomal subunit. It is not involved in the protein synthesizing functions of that subunit. The chain is Large ribosomal subunit protein bL20 from Geobacter sulfurreducens (strain ATCC 51573 / DSM 12127 / PCA).